A 309-amino-acid chain; its full sequence is Methionyl-tRNA formyltransferase (309 aa).

A (6S)-5,6,7,8-tetrahydrofolate-binding site is contributed by 107–110 (SLLP).

It belongs to the Fmt family.

The enzyme catalyses L-methionyl-tRNA(fMet) + (6R)-10-formyltetrahydrofolate = N-formyl-L-methionyl-tRNA(fMet) + (6S)-5,6,7,8-tetrahydrofolate + H(+). In terms of biological role, attaches a formyl group to the free amino group of methionyl-tRNA(fMet). The formyl group appears to play a dual role in the initiator identity of N-formylmethionyl-tRNA by promoting its recognition by IF2 and preventing the misappropriation of this tRNA by the elongation apparatus. The protein is Methionyl-tRNA formyltransferase of Borrelia recurrentis (strain A1).